We begin with the raw amino-acid sequence, 310 residues long: Carbamate kinase 1 (310 aa).

The protein belongs to the carbamate kinase family.

It localises to the cytoplasm. It catalyses the reaction hydrogencarbonate + NH4(+) + ATP = carbamoyl phosphate + ADP + H2O + H(+). It participates in metabolic intermediate metabolism; carbamoyl phosphate degradation; CO(2) and NH(3) from carbamoyl phosphate: step 1/1. The sequence is that of Carbamate kinase 1 (arcC1) from Staphylococcus aureus (strain bovine RF122 / ET3-1).